The following is a 322-amino-acid chain: DNA repair and recombination protein RadA (322 aa).

Position 105-112 (105-112 (GMYGSGKT)) interacts with ATP.

This sequence belongs to the eukaryotic RecA-like protein family.

Involved in DNA repair and in homologous recombination. Binds and assemble on single-stranded DNA to form a nucleoprotein filament. Hydrolyzes ATP in a ssDNA-dependent manner and promotes DNA strand exchange between homologous DNA molecules. The protein is DNA repair and recombination protein RadA of Methanococcus maripaludis (strain C6 / ATCC BAA-1332).